Here is a 185-residue protein sequence, read N- to C-terminus: Mitochondrial inner membrane protease atp23 (185 aa).

Residue His86 coordinates a divalent metal cation. Residue Glu87 is part of the active site. His90 is a binding site for a divalent metal cation.

The protein belongs to the peptidase M76 family.

The protein localises to the mitochondrion inner membrane. Functionally, has a dual role in the assembly of mitochondrial ATPase. Acts as a protease that removes N-terminal residues of mitochondrial ATPase CF(0) subunit 6 at the intermembrane space side. Also involved in the correct assembly of the membrane-embedded ATPase CF(0) particle, probably mediating association of subunit 6 with the subunit 9 ring. The protein is Mitochondrial inner membrane protease atp23 (atp23) of Schizosaccharomyces pombe (strain 972 / ATCC 24843) (Fission yeast).